We begin with the raw amino-acid sequence, 495 residues long: Methyl viologen resistance protein SmvA (495 aa).

Helical transmembrane passes span 5–25 (WLTL…ATVL), 44–64 (LWII…MGAL), 73–93 (LLML…FSHT), 96–116 (WLIA…PATL), 135–155 (VWAA…GILL), 158–178 (FYWG…MGLT), 192–212 (PLNL…VYSA), 220–240 (LSLW…GLFI), 260–280 (IILS…GFEL), 299–319 (VFML…GVLV), 327–347 (VATG…MTDF), 357–377 (LMAL…SAIM), 391–411 (IETM…GLLL), and 469–489 (VALS…WFSL).

This sequence belongs to the major facilitator superfamily. TCR/Tet family.

The protein localises to the cell inner membrane. Major efflux pump for acriflavine and other quaternary ammonium compounds (QACs). Also required for resistance to methyl viologen. This Salmonella typhimurium (strain LT2 / SGSC1412 / ATCC 700720) protein is Methyl viologen resistance protein SmvA (smvA).